The following is an 834-amino-acid chain: DNA-directed RNA polymerase subunit beta' (834 aa).

Positions 1-22 (MTYSNKPTGSSLRSSRNSTLEP) are enriched in polar residues. The interval 1–45 (MTYSNKPTGSSLRSSRNSTLEPQSLVHREESKRQEGPKGQNLRIG) is disordered. The span at 26 to 36 (VHREESKRQEG) shows a compositional bias: basic and acidic residues. 4 residues coordinate Zn(2+): Cys101, Cys103, Cys118, and Cys121. Positions 606, 608, and 610 each coordinate Mg(2+).

This sequence belongs to the RNA polymerase beta' chain family. RpoC1 subfamily. In plastids the minimal PEP RNA polymerase catalytic core is composed of four subunits: alpha, beta, beta', and beta''. When a (nuclear-encoded) sigma factor is associated with the core the holoenzyme is formed, which can initiate transcription. It depends on Mg(2+) as a cofactor. Requires Zn(2+) as cofactor.

The protein resides in the plastid. It localises to the chloroplast. It carries out the reaction RNA(n) + a ribonucleoside 5'-triphosphate = RNA(n+1) + diphosphate. DNA-dependent RNA polymerase catalyzes the transcription of DNA into RNA using the four ribonucleoside triphosphates as substrates. This Staurastrum punctulatum (Green alga) protein is DNA-directed RNA polymerase subunit beta'.